We begin with the raw amino-acid sequence, 201 residues long: Dephospho-CoA kinase (201 aa).

The 198-residue stretch at 4-201 folds into the DPCK domain; that stretch reads IIGITGGIAS…LEGGRQDDRD (198 aa). 12–17 is an ATP binding site; that stretch reads ASGKST.

It belongs to the CoaE family.

It is found in the cytoplasm. It catalyses the reaction 3'-dephospho-CoA + ATP = ADP + CoA + H(+). It participates in cofactor biosynthesis; coenzyme A biosynthesis; CoA from (R)-pantothenate: step 5/5. Its function is as follows. Catalyzes the phosphorylation of the 3'-hydroxyl group of dephosphocoenzyme A to form coenzyme A. This Streptococcus pneumoniae serotype 4 (strain ATCC BAA-334 / TIGR4) protein is Dephospho-CoA kinase.